A 554-amino-acid chain; its full sequence is MKSLMMNKLLFLQRITDSPSTTIISTFIVTIISIVFLYTVLLIRTTKNKQKIAAPKASGAWPFIGHLKLFMKQDTQFYRTLGTMSDKYGSVFTLRLGNQAILVVSNWEMVKECFTTNDKSFSNRPSTLSTKYMLNDTNSVVFSPYGTYWREMRKILVQKLLISNQRSEALKNLKTKEIDNSFVKLNDLCNNDVSGGGTKVRMDEWLADMMFNIIARITFGYQSGGGDAPGASTTSKNVERYKKTLDEMFVVLATRFAVSDIFPSLEFIDRLRGLVKDMKILGDELNSIAGCFIEEHRQKRRESLSSLLSLSNESVGDEQDFIDVLLSIMDQSRLPGDDPDFIIKIMILEAFAGGTDSLSATLTWVLSLLLNHPNVLKRAREEIDRHVENGKQVEVSDIPKLGYIDAIIKETMRLYPVGALSERYTTEECEVGRFNVPAGTRLLVNIWKIHRDPSVWENPSDFQPERFLCSDKVGVDLYGQNYELIPFGAGRRVCPAIVSSLQTMHYALARLIQGYEMKSASLDGKVNMEEMIAMSCHKMSPLEVIISPREPRRS.

The chain crosses the membrane as a helical span at residues 23 to 43; sequence IISTFIVTIISIVFLYTVLLI. Cys-494 is a binding site for heme.

The protein belongs to the cytochrome P450 family. Heme is required as a cofactor. Highly expressed in capsules. Expressed is stems.

It localises to the membrane. It carries out the reaction (S)-1-hydroxy-N-methylcanadine + reduced [NADPH--hemoprotein reductase] + O2 = (13S,14R)-1,13-dihydroxy-N-methylcanadine + oxidized [NADPH--hemoprotein reductase] + H2O + H(+). The protein operates within alkaloid biosynthesis. Cytochrome P450 involved in the biosynthesis of the benzylisoquinoline alkaloid noscapine. Converts (S)-1-hydroxy-N-methylcanadine to (13S,14R)-1,13-dihydroxy-N-methylcanadine. The chain is (S)-1-hydroxy-N-methylcanadine 13-hydroxylase CYP82X2 from Papaver somniferum (Opium poppy).